The chain runs to 323 residues: Peroxisomal targeting signal 2 receptor (323 aa).

WD repeat units lie at residues D65–D96, E109–D141, G153–D184, A196–D227, G240–N271, and H284–D315.

The protein belongs to the WD repeat peroxin-7 family. Interacts with PEX5; interaction only takes place when PEX7 is associated with cargo proteins. Interacts with VWA8. As to expression, ubiquitous. Highest expression in pancreas, skeletal muscle and heart.

The protein localises to the cytoplasm. Its subcellular location is the cytosol. It localises to the peroxisome matrix. Receptor required for the peroxisomal import of proteins containing a C-terminal PTS2-type peroxisomal targeting signal. Specifically binds to cargo proteins containing a PTS2 peroxisomal targeting signal in the cytosol. Cargo protein-binding triggers interaction with PEX5 and formation of a ternary complex composed of PEX5 and PEX7 along with PTS2-containing cargo proteins, which is tranlocated into peroxisomes by passing through the PEX13-PEX14 docking complex. The protein is Peroxisomal targeting signal 2 receptor of Homo sapiens (Human).